Reading from the N-terminus, the 836-residue chain is Pentatricopeptide repeat-containing protein At1g79490, mitochondrial (836 aa).

A mitochondrion-targeting transit peptide spans 1–85 (MIRGRTAKVI…QCRSIVRRFC (85 aa)). PPR repeat units follow at residues 204 to 238 (SDEC…SSSH), 242 to 276 (SFNA…GCKI), 277 to 311 (DTQT…DSLL), 312 to 346 (DGST…KLRP), 347 to 381 (SFSV…GHRP), 382 to 416 (SATM…GFRP), 417 to 451 (NFGL…GFLP), 452 to 486 (TPST…GLRP), 487 to 521 (GLSS…GYSV), 528 to 555 (VLMI…GIKT), 556 to 590 (NNFI…AGKV), and 591 to 625 (DLVL…KHKA). One can recognise a Smr domain in the interval 710-786 (LDVRNLSVGA…APGELVMEWF (77 aa)).

The protein belongs to the PPR family. P subfamily.

It localises to the mitochondrion. The sequence is that of Pentatricopeptide repeat-containing protein At1g79490, mitochondrial (EMB2217) from Arabidopsis thaliana (Mouse-ear cress).